Here is a 1538-residue protein sequence, read N- to C-terminus: Lhr helicase/uracil glycosylase (1538 aa).

Positions 1 to 897 are lhr-Core; the sequence is MADNPDPSSL…ERRASVLSLD (897 aa). Positions 34, 57, 58, 179, 180, 398, 415, and 418 each coordinate ATP. One can recognise a Helicase ATP-binding domain in the interval 38–235; it reads WHVAARSEHA…FLGGDRPVTV (198 aa). The DEVH box motif lies at 179-182; sequence DEVH. A Helicase C-terminal domain is found at 284-462; it reads GILDEVLRHR…NLTPPHNPLD (179 aa). Residues 463–552 are beta-sheet bundle; the sequence is VLAQQTVAAA…VTSGGTIPDR (90 aa). The WH domain stretch occupies residues 553 to 623; sequence GMYSVLLPEG…SARLPFWRGE (71 aa). The segment at 624-897 is domain 4; the sequence is GNGRPAELGE…ERRASVLSLD (274 aa). Residues 898–1538 are lhr-CTD; sequence SELLRNLLGQ…SSSPQGLDWG (641 aa). Positions 1287–1312 are disordered; the sequence is SNARTSTRRSHRARRGRPVYAQPVSP. A compositionally biased stretch (basic residues) spans 1292-1303; that stretch reads STRRSHRARRGR.

The protein belongs to the Lhr helicase family. Homooligomerizes, probably a homotetramer. Ca(2+) is required as a cofactor. It depends on Uracil deglycosylase activity does not require a cofactor. as a cofactor.

It catalyses the reaction Couples ATP hydrolysis with the unwinding of duplex DNA by translocating in the 3'-5' direction.. It carries out the reaction ATP + H2O = ADP + phosphate + H(+). The catalysed reaction is Hydrolyzes single-stranded DNA or mismatched double-stranded DNA and polynucleotides, releasing free uracil.. Its function is as follows. A 3'-5' helicase probably involved in DNA repair. Translocates in an ATP-dependent manner 3'-to-5' on single-stranded (ss)DNA, unwinding any encountered duplex nucleic acid. An RNA:DNA hybrid with a 3'-ssDNA loading strand is a 4.5-fold better helicase substrate than 3'-tailed double-stranded (ds)DNA; substrates where the helicase loads on a 3'-ssRNA tail (DNA:RNA and RNA:RNA) are not unwound. Unlike its M.smegmatis counterpart, the ATPase is not ssDNA-dependent. Forms a clamp around the ssDNA loading strand. Excises uracil residues from DNA; forked DNA with a dU residue is the best substrate followed by ssDNA. Inactive on dsDNA with a dU residue or DNA with an 8-oxoguanine residue. Uracil residues in DNA can arise as a result of misincorporation of dUMP residues by DNA polymerase or due to deamination of cytosine. The protein is Lhr helicase/uracil glycosylase of Escherichia coli (strain K12).